The primary structure comprises 392 residues: Imidazolonepropionase (392 aa).

Fe(3+)-binding residues include His-69 and His-71. Zn(2+) contacts are provided by His-69 and His-71. 4-imidazolone-5-propanoate is bound by residues Arg-78, Tyr-136, and His-163. Tyr-136 contributes to the N-formimidoyl-L-glutamate binding site. A Fe(3+)-binding site is contributed by His-226. His-226 lines the Zn(2+) pocket. A 4-imidazolone-5-propanoate-binding site is contributed by Gln-229. Asp-302 provides a ligand contact to Fe(3+). Zn(2+) is bound at residue Asp-302. 2 residues coordinate N-formimidoyl-L-glutamate: Asn-304 and Gly-306. Ser-307 serves as a coordination point for 4-imidazolone-5-propanoate.

Belongs to the metallo-dependent hydrolases superfamily. HutI family. Requires Zn(2+) as cofactor. Fe(3+) serves as cofactor.

Its subcellular location is the cytoplasm. It catalyses the reaction 4-imidazolone-5-propanoate + H2O = N-formimidoyl-L-glutamate. The protein operates within amino-acid degradation; L-histidine degradation into L-glutamate; N-formimidoyl-L-glutamate from L-histidine: step 3/3. Its function is as follows. Catalyzes the hydrolytic cleavage of the carbon-nitrogen bond in imidazolone-5-propanoate to yield N-formimidoyl-L-glutamate. It is the third step in the universal histidine degradation pathway. This chain is Imidazolonepropionase, found in Salinispora tropica (strain ATCC BAA-916 / DSM 44818 / JCM 13857 / NBRC 105044 / CNB-440).